The following is a 303-amino-acid chain: Dihydroorotate dehydrogenase B (NAD(+)), catalytic subunit (303 aa).

Residues Ser-21 and 45–46 (KG) contribute to the FMN site. Residues Lys-45 and 69–73 (NCIGL) contribute to the substrate site. FMN-binding residues include Asn-98 and Asn-126. Asn-126 contributes to the substrate binding site. Residue Cys-129 is the Nucleophile of the active site. FMN contacts are provided by Lys-165 and Val-191. 192-193 (NT) lines the substrate pocket. FMN contacts are provided by residues Gly-217 and 243–244 (GG).

It belongs to the dihydroorotate dehydrogenase family. Type 1 subfamily. Heterotetramer of 2 PyrK and 2 PyrD type B subunits. FMN serves as cofactor.

It localises to the cytoplasm. The catalysed reaction is (S)-dihydroorotate + NAD(+) = orotate + NADH + H(+). It functions in the pathway pyrimidine metabolism; UMP biosynthesis via de novo pathway; orotate from (S)-dihydroorotate (NAD(+) route): step 1/1. Functionally, catalyzes the conversion of dihydroorotate to orotate with NAD(+) as electron acceptor. This is Dihydroorotate dehydrogenase B (NAD(+)), catalytic subunit (pyrD) from Brachyspira hyodysenteriae (strain ATCC 49526 / WA1).